A 242-amino-acid polypeptide reads, in one-letter code: Biosynthetic peptidoglycan transglycosylase (242 aa).

A helical transmembrane segment spans residues 19 to 39 (LMVVLAIFWGGGIALFSVAPV).

The protein belongs to the glycosyltransferase 51 family.

Its subcellular location is the cell inner membrane. The enzyme catalyses [GlcNAc-(1-&gt;4)-Mur2Ac(oyl-L-Ala-gamma-D-Glu-L-Lys-D-Ala-D-Ala)](n)-di-trans,octa-cis-undecaprenyl diphosphate + beta-D-GlcNAc-(1-&gt;4)-Mur2Ac(oyl-L-Ala-gamma-D-Glu-L-Lys-D-Ala-D-Ala)-di-trans,octa-cis-undecaprenyl diphosphate = [GlcNAc-(1-&gt;4)-Mur2Ac(oyl-L-Ala-gamma-D-Glu-L-Lys-D-Ala-D-Ala)](n+1)-di-trans,octa-cis-undecaprenyl diphosphate + di-trans,octa-cis-undecaprenyl diphosphate + H(+). The protein operates within cell wall biogenesis; peptidoglycan biosynthesis. Peptidoglycan polymerase that catalyzes glycan chain elongation from lipid-linked precursors. This Escherichia coli O81 (strain ED1a) protein is Biosynthetic peptidoglycan transglycosylase.